The sequence spans 691 residues: 1-butanol dehydrogenase (cytochrome c) (691 aa).

An N-terminal signal peptide occupies residues 1 to 38 (MLTTTFARKREESVPLRKGIQRALLGLSCLVLSTTSFA). E84 contributes to the pyrroloquinoline quinone binding site. Cysteines 130 and 131 form a disulfide. Pyrroloquinoline quinone-binding positions include R136, T181, and 197–198 (GA). The Ca(2+) site is built by E199 and D322. D322 (proton acceptor) is an active-site residue. Pyrroloquinoline quinone-binding positions include K349, 408–409 (NW), and V558. In terms of domain architecture, Cytochrome c spans 605–684 (DDVAEGTGLY…KIKAFILGTA (80 aa)). The heme c site is built by C618, C621, H622, and M661.

The protein belongs to the bacterial PQQ dehydrogenase family. Monomer. Pyrroloquinoline quinone serves as cofactor. Ca(2+) is required as a cofactor. It depends on heme c as a cofactor.

It is found in the periplasm. It catalyses the reaction butan-1-ol + 2 Fe(III)-[cytochrome c] = butanal + 2 Fe(II)-[cytochrome c] + 2 H(+). Dehydrogenase activity is increased by ammonium ions. In terms of biological role, involved in the metabolism of butane. Could be important in the detoxification of 1-butanol. Catalyzes the oxidation of 1-butanol to butyraldehyde. Also able to use 1-propanol, 2-pentanol, propionaldehyde and butyraldehyde as substrates. The chain is 1-butanol dehydrogenase (cytochrome c) from Thauera butanivorans (strain ATCC 43655 / DSM 2080 / JCM 20651 / CCUG 51053 / NBRC 103042 / IAM 12574 / Bu B1211) (Pseudomonas butanovora).